Reading from the N-terminus, the 334-residue chain is Ethanol acetyltransferase 1 (334 aa).

Residues 1-16 (MFASNVVVLNKRSIRF) constitute a mitochondrion transit peptide. Residues serine 124, aspartate 148, and histidine 296 each act as charge relay system in the active site.

This sequence belongs to the AB hydrolase superfamily.

It localises to the mitochondrion. It catalyses the reaction ethanol + acetyl-CoA = ethyl acetate + CoA. The enzyme catalyses acetyl-CoA + H2O = acetate + CoA + H(+). The catalysed reaction is ethyl acetate + H2O = ethanol + acetate + H(+). Its function is as follows. Alcohol acetyltransferase that catalyzes the synthesis of ethyl acetate from ethanol and acetyl-CoA. Can also function as a thioesterase by hydrolyzing acetyl-CoA in the absence of ethanol, as well as esterase hydrolyzing ethyl acetate. This is Ethanol acetyltransferase 1 (EAT1) from Hanseniaspora uvarum (Yeast).